Consider the following 581-residue polypeptide: Adenine deaminase (581 aa).

This sequence belongs to the metallo-dependent hydrolases superfamily. Adenine deaminase family. Requires Mn(2+) as cofactor.

It catalyses the reaction adenine + H2O + H(+) = hypoxanthine + NH4(+). The protein is Adenine deaminase of Clostridium botulinum (strain Eklund 17B / Type B).